A 214-amino-acid chain; its full sequence is MSLGLVGRKVGMTRIFAEDGATIPVTVLDMSSNRVTQIKTAETDGYNAVQVTYGSKKASRVNKADAGHFAKAGVEAGLGLAEFALSADALSNFKPGDAIAVEIFTVGQLVDVTGTSKGKGFSGVIKRHNFSSNRASHGNSRSHNTPGSIGQAQDPGRVFPGKRMAGQYGNVKSTVQCLEIVRVDAERQLILVKGAVPGAKNGDVVVRPSVKAGA.

The segment covering 130 to 151 (FSSNRASHGNSRSHNTPGSIGQ) has biased composition (polar residues). Positions 130-163 (FSSNRASHGNSRSHNTPGSIGQAQDPGRVFPGKR) are disordered. Gln-153 is modified (N5-methylglutamine).

The protein belongs to the universal ribosomal protein uL3 family. As to quaternary structure, part of the 50S ribosomal subunit. Forms a cluster with proteins L14 and L19. In terms of processing, methylated by PrmB.

One of the primary rRNA binding proteins, it binds directly near the 3'-end of the 23S rRNA, where it nucleates assembly of the 50S subunit. The protein is Large ribosomal subunit protein uL3 of Chromobacterium violaceum (strain ATCC 12472 / DSM 30191 / JCM 1249 / CCUG 213 / NBRC 12614 / NCIMB 9131 / NCTC 9757 / MK).